The sequence spans 501 residues: Putative glycogen synthase kinase-3 homolog (501 aa).

Residues 33-317 (YTDAKVVGNG…PLMGCAHPFF (285 aa)) enclose the Protein kinase domain. Residues 39–47 (VGNGSFGVV) and Lys62 each bind ATP. The active-site Proton acceptor is the Asp158. At Tyr193 the chain carries Phosphotyrosine. 2 disordered regions span residues 355–427 (LLPR…HVAV) and 446–501 (SYAV…EDEN). Residues 381–390 (ESPRKTEDSQ) are compositionally biased toward basic and acidic residues. 2 stretches are compositionally biased toward acidic residues: residues 451–471 (EDAEDNLEEDVGDENDYDYDD) and 482–501 (DDMDEASESDDDDFEEEDEN).

The protein belongs to the protein kinase superfamily. CMGC Ser/Thr protein kinase family. GSK-3 subfamily. Phosphorylation on Tyr-193 is necessary for the activity.

It carries out the reaction L-seryl-[tau protein] + ATP = O-phospho-L-seryl-[tau protein] + ADP + H(+). The catalysed reaction is L-threonyl-[tau protein] + ATP = O-phospho-L-threonyl-[tau protein] + ADP + H(+). The chain is Putative glycogen synthase kinase-3 homolog (gskt) from Drosophila melanogaster (Fruit fly).